The sequence spans 310 residues: UDP-N-acetylenolpyruvoylglucosamine reductase (310 aa).

The 178-residue stretch at 34-211 folds into the FAD-binding PCMH-type domain; that stretch reads TGGPAQCVYV…REDMGKIAQE (178 aa). The active site involves Arg177. Ser225 functions as the Proton donor in the catalytic mechanism. Glu295 is an active-site residue.

It belongs to the MurB family. FAD serves as cofactor.

It localises to the cytoplasm. The catalysed reaction is UDP-N-acetyl-alpha-D-muramate + NADP(+) = UDP-N-acetyl-3-O-(1-carboxyvinyl)-alpha-D-glucosamine + NADPH + H(+). It participates in cell wall biogenesis; peptidoglycan biosynthesis. Its function is as follows. Cell wall formation. In Beijerinckia indica subsp. indica (strain ATCC 9039 / DSM 1715 / NCIMB 8712), this protein is UDP-N-acetylenolpyruvoylglucosamine reductase.